A 418-amino-acid chain; its full sequence is Calreticulin (418 aa).

A signal peptide spans Met-1–Ala-17. The interval Glu-18–Glu-197 is N-domain. Gln-26 contacts Ca(2+). Lys-48 carries the post-translational modification N6-acetyllysine. Ca(2+) is bound by residues Lys-62 and Lys-64. Lys-64 bears the N6-(2-hydroxyisobutyryl)lysine mark. A disulfide bridge connects residues Cys-105 and Cys-137. 4 residues coordinate an alpha-D-glucoside: Tyr-109, Lys-111, Tyr-128, and Asp-135. Position 159 is an N6-acetyllysine (Lys-159). The 1-1 repeat unit spans residues Val-191–Phe-202. Positions Val-191–Glu-255 are 4 X approximate repeats. Residues Ser-193–Pro-277 form a disordered region. Residues Asp-198–Tyr-308 are P-domain. Over residues Lys-207 to Glu-251 the composition is skewed to basic and acidic residues. N6-acetyllysine is present on Lys-209. A run of 6 repeats spans residues Asp-210–Glu-221, Asp-227–Lys-238, Asp-244–Glu-255, Gly-259–Pro-269, Gly-273–Pro-283, and Gly-287–Pro-297. An interaction with PPIB region spans residues Asp-237–Glu-270. Over residues Asp-252–Trp-261 the composition is skewed to acidic residues. A 3 X approximate repeats region spans residues Gly-259–Pro-297. Positions Asp-309–Leu-418 are C-domain. Residue Asp-317 participates in an alpha-D-glucoside binding. Asp-328 contributes to the Ca(2+) binding site. Residues Val-349–Leu-418 are disordered. Residues Thr-352–Glu-379 show a composition bias toward basic and acidic residues. Residues Glu-380–Ala-409 show a composition bias toward acidic residues. A Prevents secretion from ER motif is present at residues Lys-415 to Leu-418.

The protein belongs to the calreticulin family. Monomer. Component of an EIF2 complex at least composed of CELF1/CUGBP1, CALR, CALR3, EIF2S1, EIF2S2, HSP90B1 and HSPA5. Interacts with PDIA3/ERp57 and SPACA9. Interacts with TRIM21. Interacts with NR3C1. Interacts with PPIB. Interacts (via P-domain) with PDIA5. Interacts with CLCC1.

The protein localises to the endoplasmic reticulum lumen. Its subcellular location is the cytoplasm. It is found in the cytosol. The protein resides in the secreted. It localises to the extracellular space. The protein localises to the extracellular matrix. Its subcellular location is the cell surface. It is found in the sarcoplasmic reticulum lumen. The protein resides in the cytoplasmic vesicle. It localises to the secretory vesicle. The protein localises to the cortical granule. Its subcellular location is the cytolytic granule. Functionally, calcium-binding chaperone that promotes folding, oligomeric assembly and quality control in the endoplasmic reticulum (ER) via the calreticulin/calnexin cycle. This lectin interacts transiently with almost all of the monoglucosylated glycoproteins that are synthesized in the ER. Interacts with the DNA-binding domain of NR3C1 and mediates its nuclear export. Involved in maternal gene expression regulation. May participate in oocyte maturation via the regulation of calcium homeostasis. Present in the cortical granules of non-activated oocytes, is exocytosed during the cortical reaction in response to oocyte activation and might participate in the block to polyspermy. The chain is Calreticulin (CALR) from Oryctolagus cuniculus (Rabbit).